Consider the following 593-residue polypeptide: MAYDYALVHLKYTIPLAALLTVIAYPIFHRIHFLQIGSLIVVSFLATLPWDSYLIRSNIWTYPPDAIIGPRLYGIPIEELFFFVIQTYITSLFYILLSKPLFHPLYLSTQRNPPQRIARGKVIGQGILVALTLYGVHQIRTGGPGTYLGLILAWAFPFALLTFTVAGRFILTLPLTSTVVPIIIPTVYLWLVDELALGRGTWAIESGTKLGWCLFGVLDIEEATFFLATNILIVFGMAVFDQYLAIIFAFPHLFPKVPRSPTPLMLVQSRFSNTKQYDLERIAGLSDAVTRLKAKSRSFYLANSLFTGRLRIDLILLYSFCRLADDLVDDSTSRTEVKSWTTKLYKFLDLHYKSDVKANKARINDYIDEAFPPEAKSALKYLPATILPSQPLYQLIEGFELDSQFSFHDSSESAKYPIVDEDKLNYYGQCVAGTVGELCVALIIEHCEPEMPDERKKMLMSVSRTMGVALQYVNIARDIVVDAEMGRVYLPTTWLKEEGLTPEDVVAHPRGKHVENLRRRLLSEAFKLYDEARPKMNGIPKEARGPMIGAVETYMEIGRVLRELEGGVELERGKATVPGGRRLKTVLKALFSA.

The segment at 1-242 (MAYDYALVHL…IVFGMAVFDQ (242 aa)) is lycopene beta-cyclase. Transmembrane regions (helical) follow at residues 8-28 (VHLK…YPIF), 31-51 (IHFL…LPWD), 77-97 (IEEL…YILL), 117-136 (IARG…LYGV), 147-167 (YLGL…TVAG), 169-189 (FILT…TVYL), and 231-251 (ILIV…FAFP). The tract at residues 249 to 593 (AFPHLFPKVP…KTVLKALFSA (345 aa)) is phytoene synthase.

This sequence in the N-terminal section; belongs to the lycopene beta-cyclase family. The protein in the C-terminal section; belongs to the phytoene/squalene synthase family.

It is found in the membrane. The enzyme catalyses all-trans-lycopene = gamma-carotene. The catalysed reaction is gamma-carotene = all-trans-beta-carotene. It catalyses the reaction 2 (2E,6E,10E)-geranylgeranyl diphosphate = 15-cis-phytoene + 2 diphosphate. It functions in the pathway carotenoid biosynthesis; beta-carotene biosynthesis. The protein operates within carotenoid biosynthesis; phytoene biosynthesis; all-trans-phytoene from geranylgeranyl diphosphate: step 1/1. Functionally, bifunctional enzyme that catalyzes the reactions from geranylgeranyl diphosphate to phytoene (phytoene synthase) and lycopene to beta-carotene via the intermediate gamma-carotene (lycopene cyclase). This is Bifunctional lycopene cyclase/phytoene synthase from Podospora anserina (strain S / ATCC MYA-4624 / DSM 980 / FGSC 10383) (Pleurage anserina).